The chain runs to 23 residues: Paralytic peptide 1 (23 aa).

Cysteine 7 and cysteine 19 are disulfide-bonded.

Belongs to the GBP/PSP1/paralytic peptide family. As to expression, hemolymph.

Its function is as follows. Causes rapid, rigid paralysis when injected into Lepidopteran larvae. The physiological role may be to reduce hemolymph loss following injury and promote wound healing. This is Paralytic peptide 1 from Manduca sexta (Tobacco hawkmoth).